The sequence spans 86 residues: MISNEAFVLGCSAIGAGLAMIAGIGPGIGQGIAAGHGAAAVGRNPGARGNIMSTMLLGQAVAETTGLYGFAVAIILLFANPLLGKL.

2 consecutive transmembrane segments (helical) span residues 8–28 (VLGC…GPGI) and 64–84 (TTGL…PLLG).

It belongs to the ATPase C chain family. As to quaternary structure, F-type ATPases have 2 components, F(1) - the catalytic core - and F(0) - the membrane proton channel. F(1) has five subunits: alpha(3), beta(3), gamma(1), delta(1), epsilon(1). F(0) has three main subunits: a(1), b(2) and c(10-14). The alpha and beta chains form an alternating ring which encloses part of the gamma chain. F(1) is attached to F(0) by a central stalk formed by the gamma and epsilon chains, while a peripheral stalk is formed by the delta and b chains.

Its subcellular location is the cell membrane. In terms of biological role, f(1)F(0) ATP synthase produces ATP from ADP in the presence of a proton or sodium gradient. F-type ATPases consist of two structural domains, F(1) containing the extramembraneous catalytic core and F(0) containing the membrane proton channel, linked together by a central stalk and a peripheral stalk. During catalysis, ATP synthesis in the catalytic domain of F(1) is coupled via a rotary mechanism of the central stalk subunits to proton translocation. Functionally, key component of the F(0) channel; it plays a direct role in translocation across the membrane. A homomeric c-ring of between 10-14 subunits forms the central stalk rotor element with the F(1) delta and epsilon subunits. The protein is ATP synthase subunit c of Lachnoclostridium phytofermentans (strain ATCC 700394 / DSM 18823 / ISDg) (Clostridium phytofermentans).